Reading from the N-terminus, the 183-residue chain is Inner membrane-spanning protein YciB (183 aa).

Helical transmembrane passes span 19–39 (LYGV…QLIV), 53–73 (IMGI…DLNF), 76–96 (WKVT…QFVF), 121–141 (LGWA…SYYF), and 151–171 (TFGF…YLYP).

The protein belongs to the YciB family.

It localises to the cell inner membrane. Its function is as follows. Plays a role in cell envelope biogenesis, maintenance of cell envelope integrity and membrane homeostasis. In Actinobacillus pleuropneumoniae serotype 5b (strain L20), this protein is Inner membrane-spanning protein YciB.